The primary structure comprises 449 residues: Tubulin beta-4 chain (449 aa).

The short motif at M1 to I4 is the MREI motif element. The GTP site is built by Q11, E69, S138, G142, T143, G144, N204, and N226. E69 is a Mg(2+) binding site. The interval E421–K449 is disordered. Positions T429 to K449 are enriched in acidic residues. The residue at position 438 (E438) is a 5-glutamyl polyglutamate. S444 is subject to Phosphoserine.

Belongs to the tubulin family. Dimer of alpha and beta chains. A typical microtubule is a hollow water-filled tube with an outer diameter of 25 nm and an inner diameter of 15 nM. Alpha-beta heterodimers associate head-to-tail to form protofilaments running lengthwise along the microtubule wall with the beta-tubulin subunit facing the microtubule plus end conferring a structural polarity. Microtubules usually have 13 protofilaments but different protofilament numbers can be found in some organisms and specialized cells. It depends on Mg(2+) as a cofactor. Some glutamate residues at the C-terminus are polyglycylated, resulting in polyglycine chains on the gamma-carboxyl group. Glycylation is mainly limited to tubulin incorporated into axonemes (cilia and flagella) whereas glutamylation is prevalent in neuronal cells, centrioles, axonemes, and the mitotic spindle. Both modifications can coexist on the same protein on adjacent residues, and lowering polyglycylation levels increases polyglutamylation, and reciprocally. The precise function of polyglycylation is still unclear. In terms of processing, some glutamate residues at the C-terminus are polyglutamylated, resulting in polyglutamate chains on the gamma-carboxyl group. Polyglutamylation plays a key role in microtubule severing by spastin (SPAST). SPAST preferentially recognizes and acts on microtubules decorated with short polyglutamate tails: severing activity by SPAST increases as the number of glutamates per tubulin rises from one to eight, but decreases beyond this glutamylation threshold. In terms of tissue distribution, neuron specific.

The protein resides in the cytoplasm. It localises to the cytoskeleton. Functionally, tubulin is the major constituent of microtubules, a cylinder consisting of laterally associated linear protofilaments composed of alpha- and beta-tubulin heterodimers. Microtubules grow by the addition of GTP-tubulin dimers to the microtubule end, where a stabilizing cap forms. Below the cap, tubulin dimers are in GDP-bound state, owing to GTPase activity of alpha-tubulin. The polypeptide is Tubulin beta-4 chain (Gallus gallus (Chicken)).